We begin with the raw amino-acid sequence, 317 residues long: Transaldolase (317 aa).

Residue lysine 132 is the Schiff-base intermediate with substrate of the active site.

The protein belongs to the transaldolase family. Type 1 subfamily. Homodimer.

The protein localises to the cytoplasm. It carries out the reaction D-sedoheptulose 7-phosphate + D-glyceraldehyde 3-phosphate = D-erythrose 4-phosphate + beta-D-fructose 6-phosphate. It functions in the pathway carbohydrate degradation; pentose phosphate pathway; D-glyceraldehyde 3-phosphate and beta-D-fructose 6-phosphate from D-ribose 5-phosphate and D-xylulose 5-phosphate (non-oxidative stage): step 2/3. Its function is as follows. Transaldolase is important for the balance of metabolites in the pentose-phosphate pathway. The protein is Transaldolase of Edwardsiella ictaluri (strain 93-146).